A 397-amino-acid chain; its full sequence is Protochlorophyllide reductase, chloroplastic (397 aa).

The transit peptide at 1 to 57 directs the protein to the chloroplast; sequence MALTMSAKSVSARAQVSSKAQAAPAVAVSGRTSSRVMPAPALAARSSVARTPLVVCA.

The protein belongs to the short-chain dehydrogenases/reductases (SDR) family. POR subfamily.

The protein localises to the plastid. Its subcellular location is the chloroplast. It carries out the reaction chlorophyllide a + NADP(+) = protochlorophyllide a + NADPH + H(+). It participates in porphyrin-containing compound metabolism; chlorophyll biosynthesis. Functionally, phototransformation of protochlorophyllide (Pchlide) to chlorophyllide (Chlide). This chain is Protochlorophyllide reductase, chloroplastic (PORA), found in Chlamydomonas reinhardtii (Chlamydomonas smithii).